A 386-amino-acid polypeptide reads, in one-letter code: Succinate--CoA ligase [ADP-forming] subunit beta (386 aa).

In terms of domain architecture, ATP-grasp spans 9–243 (KQLFRKYSIP…PAEDDPAEAE (235 aa)). ATP contacts are provided by residues K45, 52 to 54 (GRG), E98, V101, and E106. Residues N198 and D212 each coordinate Mg(2+). Residues N263 and 320–322 (GIL) each bind substrate.

It belongs to the succinate/malate CoA ligase beta subunit family. In terms of assembly, heterotetramer of two alpha and two beta subunits. Mg(2+) serves as cofactor.

It catalyses the reaction succinate + ATP + CoA = succinyl-CoA + ADP + phosphate. The enzyme catalyses GTP + succinate + CoA = succinyl-CoA + GDP + phosphate. It participates in carbohydrate metabolism; tricarboxylic acid cycle; succinate from succinyl-CoA (ligase route): step 1/1. In terms of biological role, succinyl-CoA synthetase functions in the citric acid cycle (TCA), coupling the hydrolysis of succinyl-CoA to the synthesis of either ATP or GTP and thus represents the only step of substrate-level phosphorylation in the TCA. The beta subunit provides nucleotide specificity of the enzyme and binds the substrate succinate, while the binding sites for coenzyme A and phosphate are found in the alpha subunit. The sequence is that of Succinate--CoA ligase [ADP-forming] subunit beta from Desulfotalea psychrophila (strain LSv54 / DSM 12343).